A 150-amino-acid chain; its full sequence is MCSRFSSTSLKCLLCSQNRHCSSGISTLLRSFSCITLSAISSSVNCSGSSFLGSSFSLFSSFSCKESLLRSGVFPSWLFCMFSSILALAISNSFFFFSSNACFSLLFNSFLVTGFSFSADLLVLAAAADTLESNVSNDIGGNCATRLFKL.

Residues 1–76 (MCSRFSSTSL…SLLRSGVFPS (76 aa)) lie on the Extracellular side of the membrane. A helical transmembrane segment spans residues 77–97 (WLFCMFSSILALAISNSFFFF). Over 98-104 (SSNACFS) the chain is Cytoplasmic. A helical transmembrane segment spans residues 105–125 (LLFNSFLVTGFSFSADLLVLA). Residues 126-150 (AAADTLESNVSNDIGGNCATRLFKL) are Extracellular-facing.

It is found in the membrane. The protein is Protein SLM6 of Saccharomyces cerevisiae (strain ATCC 204508 / S288c) (Baker's yeast).